The following is a 187-amino-acid chain: Interferon beta (187 aa).

An N-terminal signal peptide occupies residues 1–21 (MTNKCLLQIALLLCFSTTALS). The residue at position 24 (Tyr-24) is a Phosphotyrosine. An intrachain disulfide couples Cys-52 to Cys-162. Asn-101 carries an N-linked (GlcNAc...) asparagine glycan.

Belongs to the alpha/beta interferon family. As to quaternary structure, monomer.

The protein localises to the secreted. Functionally, type I interferon cytokine that plays a key role in the innate immune response to infection, developing tumors and other inflammatory stimuli. Signals via binding to high-affinity (IFNAR2) and low-affinity (IFNAR1) heterodimeric receptor, activating the canonical Jak-STAT signaling pathway resulting in transcriptional activation or repression of interferon-regulated genes that encode the effectors of the interferon response, such as antiviral proteins, regulators of cell proliferation and differentiation, and immunoregulatory proteins. Signals mostly via binding to a IFNAR1-IFNAR2 heterodimeric receptor, but can also function with IFNAR1 alone and independently of Jak-STAT pathways. Elicits a wide variety of responses, including antiviral and antibacterial activities, and can regulate the development of B-cells, myelopoiesis and lipopolysaccharide (LPS)-inducible production of tumor necrosis factor. Plays a role in neuronal homeostasis by regulating dopamine turnover and protecting dopaminergic neurons: acts by promoting neuronal autophagy and alpha-synuclein clearance, thereby preventing dopaminergic neuron loss. IFNB1 is more potent than interferon-alpha (IFN-alpha) in inducing the apoptotic and antiproliferative pathways required for control of tumor cell growth. This Macaca fascicularis (Crab-eating macaque) protein is Interferon beta (IFNB1).